We begin with the raw amino-acid sequence, 252 residues long: Probable transcriptional regulatory protein RF_0799 (252 aa).

Positions methionine 1–arginine 21 are disordered.

It belongs to the TACO1 family.

Its subcellular location is the cytoplasm. This Rickettsia felis (strain ATCC VR-1525 / URRWXCal2) (Rickettsia azadi) protein is Probable transcriptional regulatory protein RF_0799.